A 705-amino-acid chain; its full sequence is Calpastatin (705 aa).

2 disordered regions span residues 1-211 (MNPT…PNDA) and 226-493 (LTTC…PLPP). Composition is skewed to basic and acidic residues over residues 7–17 (KAVKTEPEKKP) and 24–62 (VVHEKKTQEVKPKEHTEPKSLPKHSSDTGVKHAPKEKAV). Lys-10 participates in a covalent cross-link: Glycyl lysine isopeptide (Lys-Gly) (interchain with G-Cter in SUMO2). Lys-28 is subject to N6-acetyllysine. Composition is skewed to low complexity over residues 63-72 (SKSSEQPPSE) and 94-103 (PAAAAAASAE). At Ser-65 the chain carries Phosphoserine. Residue Thr-115 is modified to Phosphothreonine. Over residues 135–151 (TALDDLIDTLGEPEEMK) the composition is skewed to acidic residues. The stretch at 149-202 (EMKEDNTTYTGPEVSDPMSSTYIEELGKRESTPPPKYKELLNKEEGIAGPPPDS) is one Inhibitory domain 1 repeat. Residues 173–194 (ELGKRESTPPPKYKELLNKEEG) show a composition bias toward basic and acidic residues. 2 positions are modified to phosphoserine: Ser-202 and Ser-230. Residues 234–248 (DGKETEKEKSTEEAL) are compositionally biased toward basic and acidic residues. Over residues 275-286 (TEQALQALSASL) the composition is skewed to polar residues. 2 stretches are compositionally biased toward basic and acidic residues: residues 289–317 (RKPEPELDPSSIREVDEAKAKEEKVKKCG) and 327–352 (YRLKPATDKDGKPLLPEAEEKPKPLS). The stretch at 292–344 (EPELDPSSIREVDEAKAKEEKVKKCGEDEETVPSEYRLKPATDKDGKPLLPEA) is one Inhibitory domain 2 repeat. 3 positions are modified to phosphoserine: Ser-352, Ser-354, and Ser-361. The span at 355–364 (ELIDELSEDF) shows a compositional bias: acidic residues. A compositionally biased stretch (basic and acidic residues) spans 365 to 381 (DQSKPTEKQSKPTEKTE). The residue at position 428 (Ser-428) is a Phosphoserine. A compositionally biased stretch (basic and acidic residues) spans 430-489 (PKKEADPEDGKPVEDKVKEKAKEEDRENFGEKEETIPPDYRLEEAKDKDGKPLLPKEVKE). One copy of the Inhibitory domain 3 repeat lies at 434 to 487 (ADPEDGKPVEDKVKEKAKEEDRENFGEKEETIPPDYRLEEAKDKDGKPLLPKEV). Phosphoserine is present on residues Ser-504 and Ser-515. The segment at 527 to 705 (VSEVVSQTPA…KPKADGKSTS (179 aa)) is disordered. Residues 533–542 (QTPAPTTQAA) show a composition bias toward low complexity. Residue Ser-563 is modified to Phosphoserine. The Inhibitory domain 4 repeat unit spans residues 571–624 (PDPDENKPVEDKVKEKAKAEHRDKLGERDDTIPPKYQHLLDDNKEGTPGKPKDQ). Basic and acidic residues predominate over residues 571–625 (PDPDENKPVEDKVKEKAKAEHRDKLGERDDTIPPKYQHLLDDNKEGTPGKPKDQR). Residues 651-662 (DSCPSTTETSTD) are compositionally biased toward low complexity. A compositionally biased stretch (basic and acidic residues) spans 683–705 (KAKDSTKAKEETSKPKADGKSTS).

Belongs to the protease inhibitor I27 (calpastatin) family.

Specific inhibition of calpain (calcium-dependent cysteine protease). Plays a key role in postmortem tenderization of meat and have been proposed to be involved in muscle protein degradation in living tissue. The protein is Calpastatin (CAST) of Bos taurus (Bovine).